A 752-amino-acid polypeptide reads, in one-letter code: Multifunctional tryptophan biosynthesis protein (752 aa).

Residues 3–202 (FTLLIDNYDS…IQMKGGKWGG (200 aa)) enclose the Glutamine amidotransferase type-1 domain. 58–60 (GPG) contributes to the L-glutamine binding site. The active-site Nucleophile; for GATase activity is Cys86. Position 136 to 137 (136 to 137 (SL)) interacts with L-glutamine. Residues His176 and Glu178 each act as for GATase activity in the active site. Residues 231-495 (ILNRIHAQRL…DTKAFLRSLI (265 aa)) are indole-3-glycerol phosphate synthase. Positions 509–752 (LVKICGIRST…VEAFVKAVRG (244 aa)) are N-(5'-phosphoribosyl)anthranilate isomerase.

The catalysed reaction is N-(5-phospho-beta-D-ribosyl)anthranilate = 1-(2-carboxyphenylamino)-1-deoxy-D-ribulose 5-phosphate. It catalyses the reaction 1-(2-carboxyphenylamino)-1-deoxy-D-ribulose 5-phosphate + H(+) = (1S,2R)-1-C-(indol-3-yl)glycerol 3-phosphate + CO2 + H2O. The enzyme catalyses chorismate + L-glutamine = anthranilate + pyruvate + L-glutamate + H(+). It participates in amino-acid biosynthesis; L-tryptophan biosynthesis; L-tryptophan from chorismate: step 1/5. It functions in the pathway amino-acid biosynthesis; L-tryptophan biosynthesis; L-tryptophan from chorismate: step 3/5. Its pathway is amino-acid biosynthesis; L-tryptophan biosynthesis; L-tryptophan from chorismate: step 4/5. Its function is as follows. Trifunctional enzyme bearing the Gln amidotransferase (GATase) domain of anthranilate synthase, indole-glycerolphosphate synthase, and phosphoribosylanthranilate isomerase activities. This Cryptococcus neoformans var. neoformans serotype D (strain JEC21 / ATCC MYA-565) (Filobasidiella neoformans) protein is Multifunctional tryptophan biosynthesis protein (TRP1).